The primary structure comprises 519 residues: MTQKDAAFHIERLLKFALKKGLIEELDVIPSRNALMDLFKIEKPYEGEVPEEELDTPSPILNKLLDYGVEIGLIEDTVTYRDLMDARIMGLLMPRESEVVRKFNEIASKDGIEKATEYFYELSKASNYIRMDRTSQNLYWRTPTEYGALEITINLSKPEKDPKEIEKAKKIPQSGYPKCLLCIENVGFAGNLNHPARQNLRIIPVKVAGEQWYFQYSPYVYYNEHCILLHEEHIPMKISEKTFVRLFDFIDQFPHYFMGSNADLPIVGGSILVHEHFQGGRHTFPMEEAPIEEYFIHPKYKEVKAGILKWPMSVIRLSSKDREKLTKLSSHILNVWKGYSDESVDVLAYSEKDGKIVPHNTITPIARFNKEGEYEIDLVLRNNRTTDKYPYGIFHPHEELHHIKKENIGLIEVMGLAVLPGRLKFELEEIRKILTGKEKFNKDMYDENHPLYKHLHWIEELIVKYGTHCTEEEAENYIKQEVGNKFLQVLLDAGVFKRDEKGKKAFEKFMETAGFKKLS.

The protein belongs to the galactose-1-phosphate uridylyltransferase type 2 family.

Its subcellular location is the cytoplasm. The catalysed reaction is alpha-D-galactose 1-phosphate + UDP-alpha-D-glucose = alpha-D-glucose 1-phosphate + UDP-alpha-D-galactose. Its pathway is carbohydrate metabolism; galactose metabolism. The sequence is that of Galactose-1-phosphate uridylyltransferase from Caldanaerobacter subterraneus subsp. tengcongensis (strain DSM 15242 / JCM 11007 / NBRC 100824 / MB4) (Thermoanaerobacter tengcongensis).